The primary structure comprises 619 residues: Translation initiation factor eIF2B subunit delta (619 aa).

Residues 21 to 32 (GDYLDSKQEGKP) show a composition bias toward basic and acidic residues. The segment at 21 to 251 (GDYLDSKQEG…PKQRGKITKK (231 aa)) is disordered. Residues 42–56 (TNTSPVSIPTIISPP) show a composition bias toward low complexity. The segment covering 57 to 84 (LGSNNSNYGKSPKSSYDNKQTSPLLSAS) has biased composition (polar residues). Low complexity predominate over residues 85 to 98 (NNRKNNNNNNNNNN). A compositionally biased stretch (polar residues) spans 99–125 (ATSPKDSSIIGKNNVNSDLSKVSSSLN). Low complexity predominate over residues 136–199 (STSSTPTSTP…KQQSKQQATQ (64 aa)). Over residues 200-244 (QDKKDKEQQQQQQDKQDKESNEIKGSKEVAKDGQHGVKQFDDPKQ) the composition is skewed to basic and acidic residues.

This sequence belongs to the eIF-2B alpha/beta/delta subunits family. In terms of assembly, component of the translation initiation factor 2B (eIF2B) complex which is a heterodecamer of two sets of five different subunits: alpha, beta, gamma, delta and epsilon. Subunits alpha, beta and delta comprise a regulatory subcomplex and subunits epsilon and gamma comprise a catalytic subcomplex. Within the complex, the hexameric regulatory complex resides at the center, with the two heterodimeric catalytic subcomplexes bound on opposite sides.

It localises to the cytoplasm. It is found in the cytosol. Acts as a component of the translation initiation factor 2B (eIF2B) complex, which catalyzes the exchange of GDP for GTP on eukaryotic initiation factor 2 (eIF2) gamma subunit. Its guanine nucleotide exchange factor activity is repressed when bound to eIF2 complex phosphorylated on the alpha subunit, thereby limiting the amount of methionyl-initiator methionine tRNA available to the ribosome and consequently global translation is repressed. The polypeptide is Translation initiation factor eIF2B subunit delta (eif2b4) (Dictyostelium discoideum (Social amoeba)).